The chain runs to 370 residues: MLIFPLINDTSRKIIHIDMDAFFAAVEERDNPKLKGKPLVIGADPRQTGGRGVVSTANYLAREFGIHSAMSSKEAYERCPQAIFIRGNHTKYRQIGLQVREIFRRYTDLVEPMSIDEAYLDVTENKLNIKSAVKIAKLIQRDIWEEFHLTCSAGVSYNKFLAKLASDYDKPHGLTVILPQDAEGFLATLPIEKFYGVGKKSVEKLHALHIFTGKDVQQVPEMTLIDLFGRFGFDLYRKARGISNSPVKNDRIRKSIGSERTYGKLLYNDEDIKLELSKTARRVADSLKKHGRKGKIVVIKVRYSDFSTLTKRKTLDVPTQDFEVIERSAHRIFDHLTENNSGVRLLGVTVTALEDSTREELSLTADDFKT.

Residues 14 to 198 form the UmuC domain; sequence IIHIDMDAFF…LPIEKFYGVG (185 aa). Mg(2+)-binding residues include Asp18 and Asp116. The active site involves Glu117.

It belongs to the DNA polymerase type-Y family. Monomer. The cofactor is Mg(2+).

It localises to the cytoplasm. The catalysed reaction is DNA(n) + a 2'-deoxyribonucleoside 5'-triphosphate = DNA(n+1) + diphosphate. Poorly processive, error-prone DNA polymerase involved in untargeted mutagenesis. Copies undamaged DNA at stalled replication forks, which arise in vivo from mismatched or misaligned primer ends. These misaligned primers can be extended by PolIV. Exhibits no 3'-5' exonuclease (proofreading) activity. May be involved in translesional synthesis, in conjunction with the beta clamp from PolIII. The polypeptide is DNA polymerase IV (Streptococcus mutans serotype c (strain ATCC 700610 / UA159)).